The following is a 388-amino-acid chain: MNLHEYQAKQLFARYGMPAPTGYACTTPREAEEAASKIGAGPWVVKCQVHAGGRGKAGGVKLVNSKEDIRAFAEQWLGKKLVTYQTDVHGQPVHQILVEAATDIDKELYLGAVIDRSSRRVVFMASTEGGVEIEKVAEETPELIHKVALDPLTGPQPYQGRELAFKLGLTGKQVAQFTKIFMGLATLFLERDLAMVEINPLVITKQGDLVCLDGKLGADGNALFRQPELREMRDKSQEDEREAQAAQWELNYVALDGNIGCMVNGAGLAMGTMDIVKLHGGEPANFLDVGGGATKERVTEAFKIILSDDKVKAVFVNIFGGIVRCDLIADGIIGAVEEVGVNVPVVVRLEGNNAELGAKKLADSGLNIIAATSLTDAAQQVVAAVGAK.

The ATP-grasp domain maps to 9-244 (KQLFARYGMP…KSQEDEREAQ (236 aa)). ATP contacts are provided by residues Lys-46, 53-55 (GRG), Glu-99, Thr-102, and Glu-107. Asn-199 and Asp-213 together coordinate Mg(2+). Residues Asn-264 and 321–323 (GIV) contribute to the substrate site.

The protein belongs to the succinate/malate CoA ligase beta subunit family. Heterotetramer of two alpha and two beta subunits. Mg(2+) is required as a cofactor.

It catalyses the reaction succinate + ATP + CoA = succinyl-CoA + ADP + phosphate. The catalysed reaction is GTP + succinate + CoA = succinyl-CoA + GDP + phosphate. The protein operates within carbohydrate metabolism; tricarboxylic acid cycle; succinate from succinyl-CoA (ligase route): step 1/1. Succinyl-CoA synthetase functions in the citric acid cycle (TCA), coupling the hydrolysis of succinyl-CoA to the synthesis of either ATP or GTP and thus represents the only step of substrate-level phosphorylation in the TCA. The beta subunit provides nucleotide specificity of the enzyme and binds the substrate succinate, while the binding sites for coenzyme A and phosphate are found in the alpha subunit. The polypeptide is Succinate--CoA ligase [ADP-forming] subunit beta (Yersinia enterocolitica serotype O:8 / biotype 1B (strain NCTC 13174 / 8081)).